The sequence spans 557 residues: Urocanate hydratase (557 aa).

The tract at residues 1–20 (MSNPRHNEREVRSPRGDELN) is disordered. NAD(+) contacts are provided by residues 52–53 (GG), Q130, 176–178 (GMG), E196, R201, 242–243 (NA), 263–267 (QTSAH), 273–274 (YL), and Y322. C410 is a catalytic residue. An NAD(+)-binding site is contributed by G492.

Belongs to the urocanase family. It depends on NAD(+) as a cofactor.

It is found in the cytoplasm. It carries out the reaction 4-imidazolone-5-propanoate = trans-urocanate + H2O. It functions in the pathway amino-acid degradation; L-histidine degradation into L-glutamate; N-formimidoyl-L-glutamate from L-histidine: step 2/3. Its function is as follows. Catalyzes the conversion of urocanate to 4-imidazolone-5-propionate. The sequence is that of Urocanate hydratase from Brucella melitensis biotype 2 (strain ATCC 23457).